The chain runs to 313 residues: NAD-capped RNA hydrolase NudC (313 aa).

Arg-111 is a binding site for substrate. The 126-residue stretch at 168-293 (PRIDPAVICL…DWSSASESKL (126 aa)) folds into the Nudix hydrolase domain. A divalent metal cation contacts are provided by Ala-202, Glu-218, and Glu-222. Residues 203–224 (GFVEAGESFEVCVAREIREEIG) carry the Nudix box motif. 236–243 (QQWPFPRS) contributes to the substrate binding site. Glu-264 contacts a divalent metal cation.

The protein belongs to the Nudix hydrolase family. NudC subfamily. In terms of assembly, homodimer. It depends on Mg(2+) as a cofactor. Mn(2+) is required as a cofactor.

It carries out the reaction a 5'-end NAD(+)-phospho-ribonucleoside in mRNA + H2O = a 5'-end phospho-adenosine-phospho-ribonucleoside in mRNA + beta-nicotinamide D-ribonucleotide + 2 H(+). The catalysed reaction is NAD(+) + H2O = beta-nicotinamide D-ribonucleotide + AMP + 2 H(+). It catalyses the reaction NADH + H2O = reduced beta-nicotinamide D-ribonucleotide + AMP + 2 H(+). MRNA decapping enzyme that specifically removes the nicotinamide adenine dinucleotide (NAD) cap from a subset of mRNAs by hydrolyzing the diphosphate linkage to produce nicotinamide mononucleotide (NMN) and 5' monophosphate mRNA. The NAD-cap is present at the 5'-end of some mRNAs and stabilizes RNA against 5'-processing. Has preference for mRNAs with a 5'-end purine. Catalyzes the hydrolysis of a broad range of dinucleotide pyrophosphates. The chain is NAD-capped RNA hydrolase NudC from Mycobacterium tuberculosis (strain ATCC 25177 / H37Ra).